A 64-amino-acid chain; its full sequence is Small ribosomal subunit protein eS17 (64 aa).

Belongs to the eukaryotic ribosomal protein eS17 family.

The polypeptide is Small ribosomal subunit protein eS17 (Methanosarcina acetivorans (strain ATCC 35395 / DSM 2834 / JCM 12185 / C2A)).